Here is a 247-residue protein sequence, read N- to C-terminus: tRNA (guanine-N(1)-)-methyltransferase (247 aa).

Residues Gly113 and 133-138 (IGDFVM) each bind S-adenosyl-L-methionine.

This sequence belongs to the RNA methyltransferase TrmD family. In terms of assembly, homodimer.

The protein resides in the cytoplasm. It carries out the reaction guanosine(37) in tRNA + S-adenosyl-L-methionine = N(1)-methylguanosine(37) in tRNA + S-adenosyl-L-homocysteine + H(+). In terms of biological role, specifically methylates guanosine-37 in various tRNAs. The protein is tRNA (guanine-N(1)-)-methyltransferase of Vibrio campbellii (strain ATCC BAA-1116).